A 418-amino-acid chain; its full sequence is N-acetylglucosamine-6-phosphate deacetylase (418 aa).

Glu-154 serves as a coordination point for a divalent metal cation. 165–166 provides a ligand contact to substrate; that stretch reads CH. The a divalent metal cation site is built by His-223 and His-244. Residues 247-248, Arg-255, and 281-284 each bind substrate; these read NA and DGIH. Asp-306 functions as the Proton donor/acceptor in the catalytic mechanism. 340–342 provides a ligand contact to substrate; sequence TAG.

Belongs to the metallo-dependent hydrolases superfamily. NagA family. The cofactor is a divalent metal cation.

The enzyme catalyses N-acetyl-D-glucosamine 6-phosphate + H2O = D-glucosamine 6-phosphate + acetate. The sequence is that of N-acetylglucosamine-6-phosphate deacetylase from Caenorhabditis elegans.